We begin with the raw amino-acid sequence, 467 residues long: MTPPRKLHIKSYGCQMNVYDAQRMVDTLGAEGFVETADAGDADLVILNTCHIREKASEKVYSELGRLRVAKEEAARSGRAMQIAVAGCVAQAEGVEIISRAPTVDVVVGPQSYHHLPQLLAQASRGERAIETEFPAEDKFGFLAKPSREAIRARGVSAFVTVQEGCDKFCTFCVVPYTRGAEMSRPVARIVDDVMQLTDSGVREITLIGQNVNAYHGEGPDGRTWTLGRLLYRIAEIPGVARIRYSTSHPNDVDDGLIAAHRDLTAVMPFVHLPVQSGSDRILAAMNRKHSAADYRRVVDRFRGARDDIAFSSDFIVGFPGETEEDFRATLALIDQIGYAAAYSFKYSPRPGTPAADMQEMVSATEMDERLERLQSLIDSQQAAFNKAAIGSVVDVLFEREARKPGQLVGRTAYLQPAHVMASSDIIGQVLPVRIDSLERYSLLGELVATTAAPIPEAAMPLASIGG.

The MTTase N-terminal domain maps to 5–125; the sequence is RKLHIKSYGC…LPQLLAQASR (121 aa). Positions 14, 50, 88, 166, 170, and 173 each coordinate [4Fe-4S] cluster. Residues 152-384 form the Radical SAM core domain; that stretch reads RARGVSAFVT…QSLIDSQQAA (233 aa). The TRAM domain maps to 387 to 449; the sequence is KAAIGSVVDV…RYSLLGELVA (63 aa).

The protein belongs to the methylthiotransferase family. MiaB subfamily. As to quaternary structure, monomer. It depends on [4Fe-4S] cluster as a cofactor.

It is found in the cytoplasm. The enzyme catalyses N(6)-dimethylallyladenosine(37) in tRNA + (sulfur carrier)-SH + AH2 + 2 S-adenosyl-L-methionine = 2-methylsulfanyl-N(6)-dimethylallyladenosine(37) in tRNA + (sulfur carrier)-H + 5'-deoxyadenosine + L-methionine + A + S-adenosyl-L-homocysteine + 2 H(+). In terms of biological role, catalyzes the methylthiolation of N6-(dimethylallyl)adenosine (i(6)A), leading to the formation of 2-methylthio-N6-(dimethylallyl)adenosine (ms(2)i(6)A) at position 37 in tRNAs that read codons beginning with uridine. The sequence is that of tRNA-2-methylthio-N(6)-dimethylallyladenosine synthase from Bradyrhizobium sp. (strain ORS 278).